The primary structure comprises 365 residues: 3-galactosyl-N-acetylglucosaminide 4-alpha-L-fucosyltransferase FUT3 (365 aa).

Residues 1 to 15 (MYPPGCAKVKCSWHH) are Cytoplasmic-facing. A helical; Signal-anchor for type II membrane protein transmembrane segment spans residues 16 to 34 (CLPGLLLQLLLALCFFSYL). Residues 35 to 365 (RMSQEKPKPK…TVPSIASWFQ (331 aa)) are Lumenal-facing. N-linked (GlcNAc...) asparagine glycosylation is found at Asn-100, Asn-158, and Asn-189.

The protein belongs to the glycosyltransferase 10 family. Post-translationally, glycosylated. In terms of tissue distribution, liver, kidney, lung and brain.

It is found in the golgi apparatus. The protein localises to the golgi stack membrane. The catalysed reaction is a beta-D-galactosyl-(1-&gt;3)-N-acetyl-beta-D-glucosaminyl derivative + GDP-beta-L-fucose = a beta-D-galactosyl-(1-&gt;3)-[alpha-L-fucosyl-(1-&gt;4)]-N-acetyl-beta-D-glucosaminyl derivative + GDP + H(+). It catalyses the reaction an N-acetyl-alpha-neuraminyl-(2-&gt;3)-beta-D-galactosyl-(1-&gt;4)-N-acetyl-beta-D-glucosaminyl derivative + GDP-beta-L-fucose = an alpha-Neu5Ac-(2-&gt;3)-beta-D-Gal-(1-&gt;4)-[alpha-L-Fuc-(1-&gt;3)]-beta-D-GlcNAc derivative + GDP + H(+). The enzyme catalyses a beta-D-galactosyl-(1-&gt;4)-N-acetyl-beta-D-glucosaminyl derivative + GDP-beta-L-fucose = a beta-D-galactosyl-(1-&gt;4)-[alpha-L-fucosyl-(1-&gt;3)]-N-acetyl-beta-D-glucosaminyl derivative + GDP + H(+). It carries out the reaction an alpha-Neu5Ac-(2-&gt;3)-beta-D-Gal-(1-&gt;4)-beta-D-GlcNAc-(1-&gt;3)-beta-D-Gal-(1-&gt;4)-[alpha-L-Fuc-(1-&gt;3)]-beta-D-GlcNAc derivative + GDP-beta-L-fucose = an alpha-Neu5Ac-(2-&gt;3)-beta-D-Gal-(1-&gt;4)-[alpha-L-Fuc-(1-&gt;3)]-beta-D-GlcNAc-(1-&gt;3)-beta-D-Gal-(1-&gt;4)-[alpha-L-Fuc-(1-&gt;3)]-beta-D-GlcNAc derivative + GDP + H(+). The catalysed reaction is Lc4Cer + GDP-beta-L-fucose = a lactoside III(4)-a-Fuc-Lc4Cer + GDP + H(+). It catalyses the reaction a beta-D-Gal-(1-&gt;3)-beta-D-GlcNAc-(1-&gt;3)-beta-D-Gal-(1-&gt;4)-beta-D-Glc-(1&lt;-&gt;1')-Cer(d18:1(4E)) + GDP-beta-L-fucose = a III(4)-a-Fuc-Lc4Cer(d18:1(4E)) + GDP + H(+). The enzyme catalyses N-acetyl-alpha-neuraminosyl-(2-&gt;3)-beta-D-galactosyl-(1-&gt;3)-[N-acetyl-alpha-neuraminosyl-(2-&gt;6)]-N-acetyl-beta-D-glucosaminyl-(1-&gt;3)-beta-D-galactosyl-(1-&gt;4)-beta-D-glucosyl-(1&lt;-&gt;1')-N-acyl-sphing-4-enine + GDP-beta-L-fucose = N-acetyl-alpha-neuraminosyl-(2-&gt;3)-beta-D-galactosyl-(1-&gt;3)-alpha-L-fucosyl-(1-&gt;4)-[N-acetyl-alpha-neuraminosyl-(2-&gt;6)-N-acetyl-beta-D-glucosaminyl-(1-&gt;3)]-beta-D-galactosyl-(1-&gt;4)-beta-D-glucosyl-(1&lt;-&gt;1')-N-acyl-sphing-4-enine + GDP + H(+). It carries out the reaction N-acetyl-alpha-neuraminosyl-(2-&gt;3)-beta-D-galactosyl-(1-&gt;3)-N-acetyl-beta-D-glucosaminyl-(1-&gt;3)-beta-D-galactosyl-(1-&gt;4)-beta-D-glucosyl-(1&lt;-&gt;1')-N-acyl-sphing-4-enine + GDP-beta-L-fucose = N-acetyl-alpha-neuraminosyl-(2-&gt;3)-beta-D-galactosyl-(1-&gt;3)-alpha-L-fucosyl-(1-&gt;4)-[N-acetyl-beta-D-glucosaminyl-(1-&gt;3)]-beta-D-galactosyl-(1-&gt;4)-beta-D-glucosyl-(1&lt;-&gt;1')-N-acyl-sphing-4-enine + GDP + H(+). The catalysed reaction is beta-D-galactosyl-(1-&gt;3)-N-acetyl-D-glucosamine + GDP-beta-L-fucose = beta-D-galactosyl-(1-&gt;3)-[alpha-L-fucosyl-(1-&gt;4)]-N-acetyl-D-glucosamine + GDP + H(+). It catalyses the reaction alpha-L-Fuc-(1-&gt;2)-beta-D-Gal-(1-&gt;3)-D-GlcNAc + GDP-beta-L-fucose = alpha-L-Fuc-(1-&gt;2)-beta-D-Gal-(1-&gt;3)-[alpha-L-Fuc-(1-&gt;4)]-D-GlcNAc + GDP + H(+). The enzyme catalyses alpha-L-Fuc-(1-&gt;2)-beta-D-Gal-(1-&gt;4)-D-GlcNAc + GDP-beta-L-fucose = alpha-L-Fuc-(1-&gt;2)-beta-D-Gal-(1-&gt;4)-[alpha-L-Fuc-(1-&gt;3)]-D-GlcNAc + GDP + H(+). It carries out the reaction beta-D-galactosyl-(1-&gt;4)-N-acetyl-D-glucosamine + GDP-beta-L-fucose = beta-D-galactosyl-(1-&gt;4)-[alpha-L-fucosyl-(1-&gt;3)]-N-acetyl-D-glucosamine + GDP + H(+). The catalysed reaction is lactose + GDP-beta-L-fucose = beta-D-galactosyl-(1-&gt;4)-[alpha-L-fucosyl-(1-&gt;3)]-D-glucose + GDP + H(+). It catalyses the reaction an alpha-Neu5Ac-(2-&gt;3)-beta-D-Gal-(1-&gt;3)-D-GlcNAc derivative + GDP-beta-L-fucose = an alpha-Neu5Ac-(2-&gt;3)-beta-D-Gal-(1-&gt;3)-[alpha-L-Fuc-(1-&gt;4)]-beta-D-GlcNAc derivative + GDP + H(+). Its pathway is protein modification; protein glycosylation. Catalyzes the transfer of L-fucose, from a guanosine diphosphate-beta-L-fucose, to both the subterminal N-acetyl glucosamine (GlcNAc) of type 1 chain (beta-D-Gal-(1-&gt;3)-beta-D-GlcNAc) glycolipids and oligosaccharides via an alpha(1,4) linkage, and the subterminal glucose (Glc) or GlcNAc of type 2 chain (beta-D-Gal-(1-&gt;4)-beta-D-GlcNAc) oligosaccharides via an alpha(1,3) linkage, independently of the presence of terminal alpha-L-fucosyl-(1,2) moieties on the terminal galactose of these acceptors and participates in the blood groups Lewis determination and expression of Lewis a (Le(a)), lewis b (Le(b)), Lewis x/SSEA-1 (Le(x)) and lewis y (Le(y)) antigens. Also catalyzes the transfer of L-fucose to subterminal GlcNAc of sialyl- and disialyl-lactotetraosylceramide to produce sialyl Lewis a (sLe(a)) and disialyl Lewis a via an alpha(1,4) linkage and therefore may regulate cell surface sialyl Lewis a expression and consequently regulates adhesive properties to E-selectin, cell proliferation and migration. Catalyzes the transfer of an L-fucose to 3'-sialyl-N-acetyllactosamine by an alpha(1,3) linkage, which allows the formation of sialyl-Lewis x structure and therefore may regulate the sialyl-Lewis x surface antigen expression and consequently adhesive properties to E-selectin. Prefers type 1 chain over type 2 acceptors. Type 1 tetrasaccharide is a better acceptor than type 1 disaccharide suggesting that a beta anomeric configuration of GlcNAc in the substrate is preferred. Lewis-positive (Le(+)) individuals have an active enzyme while Lewis-negative (Le(-)) individuals have an inactive enzyme. The polypeptide is 3-galactosyl-N-acetylglucosaminide 4-alpha-L-fucosyltransferase FUT3 (Bos taurus (Bovine)).